Here is a 408-residue protein sequence, read N- to C-terminus: UDP-N-acetylglucosamine--dolichyl-phosphate N-acetylglucosaminephosphotransferase (408 aa).

Topologically, residues 1 to 10 (MWAFPELPLP) are lumenal. A helical transmembrane segment spans residues 11 to 38 (LLVNLFGSLLGFVATVTLIPAFRSHFIA). At 39 to 58 (ARLCGQDLNKLSRQQIPESQ) the chain is on the cytoplasmic side. UDP-N-acetyl-alpha-D-glucosamine is bound by residues 44–46 (QDL) and Glu-56. A helical membrane pass occupies residues 59-78 (GVICGAVFLIILFCFIPFPF). Topologically, residues 79 to 91 (LNCFVEEQCKAFP) are lumenal. Residues 92 to 118 (HHEFVALIGALLAICCMIFLGFADDVL) form a helical membrane-spanning segment. The Cytoplasmic segment spans residues 119–121 (NLR). A helical membrane pass occupies residues 122–143 (WRHKLLLPTAASLPLLMVYFTN). Residue Lys-125 participates in dolichyl phosphate binding. The Lumenal portion of the chain corresponds to 144-166 (FGNTTIVVPKPFRWILGLHLDLG). Asn-146 is a glycosylation site (N-linked (GlcNAc...) asparagine). The chain crosses the membrane as a helical span at residues 167-186 (ILYYVYMGLLAVFCTNAINI). 178–186 (VFCTNAINI) contacts dolichyl phosphate. Asn-185 lines the Mg(2+) pocket. Residues 187 to 192 (LAGING) are Cytoplasmic-facing. A UDP-N-acetyl-alpha-D-glucosamine-binding site is contributed by Asn-191. A helical transmembrane segment spans residues 193-213 (LEAGQSLVISASIIVFNLVEL). At 214–218 (EGDYR) the chain is on the lumenal side. Residues 219 to 242 (DDHVFSLYFMIPFFFTTLGLLYHN) form a helical membrane-spanning segment. The Cytoplasmic portion of the chain corresponds to 243 to 250 (WYPSQVFV). The chain crosses the membrane as a helical span at residues 251–269 (GDTFCYFAGMTFAVVGILG). Residue Asp-252 coordinates Mg(2+). The Lumenal segment spans residues 270–271 (HF). A helical transmembrane segment spans residues 272–293 (SKTMLLFFIPQVFNFLYSLPQL). Residues 294-375 (LHAIPCPRHR…LLLKIFGPIH (82 aa)) lie on the Cytoplasmic side of the membrane. Residue 301 to 303 (RHR) coordinates UDP-N-acetyl-alpha-D-glucosamine. Residues 376–400 (ERNLTLLLLLLQILSSAVTFSIRYQ) form a helical membrane-spanning segment. The Lumenal segment spans residues 401–408 (LVRLFYDV).

This sequence belongs to the glycosyltransferase 4 family. In terms of assembly, homodimer. The cofactor is Mg(2+).

It localises to the endoplasmic reticulum membrane. It carries out the reaction a di-trans,poly-cis-dolichyl phosphate + UDP-N-acetyl-alpha-D-glucosamine = an N-acetyl-alpha-D-glucosaminyl-diphospho-di-trans,poly-cis-dolichol + UMP. It participates in protein modification; protein glycosylation. With respect to regulation, inhibited by natural nucleoside antibiotic tunicamycin, which acts as a structural analog and competitor of UDP-GlcNAc. Its function is as follows. UDP-N-acetylglucosamine--dolichyl-phosphate N-acetylglucosaminephosphotransferase that operates in the biosynthetic pathway of dolichol-linked oligosaccharides, the glycan precursors employed in protein asparagine (N)-glycosylation. The assembly of dolichol-linked oligosaccharides begins on the cytosolic side of the endoplasmic reticulum membrane and finishes in its lumen. The sequential addition of sugars to dolichol pyrophosphate produces dolichol-linked oligosaccharides containing fourteen sugars, including two GlcNAcs, nine mannoses and three glucoses. Once assembled, the oligosaccharide is transferred from the lipid to nascent proteins by oligosaccharyltransferases. Catalyzes the initial step of dolichol-linked oligosaccharide biosynthesis, transfering GlcNAc-1-P from cytosolic UDP-GlcNAc onto the carrier lipid dolichyl phosphate (P-dolichol), yielding GlcNAc-P-P-dolichol embedded in the cytoplasmic leaflet of the endoplasmic reticulum membrane. The protein is UDP-N-acetylglucosamine--dolichyl-phosphate N-acetylglucosaminephosphotransferase (DPAGT1) of Cricetulus griseus (Chinese hamster).